The chain runs to 217 residues: MINLILLGLPGAGKGTASESIVDKYHLAHISTGDMFREAMANETPVGLEAKSYIDKGNLVPDEVTAKLVEERLKQPDTKNGFILDGFPRTTVQAELLEDITKRLEKPLTNVIAIDVDEDVLIKRLSARYICKKCGATYNKISNPTKVEGTCDRCGGHEFFQREDDKPEVVKNRLEVNKKMNTPLRDFYEEKGILSTVNGEQTPEKVFEDIDKILSKD.

An ATP-binding site is contributed by 11–16 (GAGKGT). Residues 31–60 (STGDMFREAMANETPVGLEAKSYIDKGNLV) form an NMP region. Residues threonine 32, arginine 37, 58–60 (NLV), 86–89 (GFPR), and glutamine 93 contribute to the AMP site. The tract at residues 127–165 (ARYICKKCGATYNKISNPTKVEGTCDRCGGHEFFQREDD) is LID. ATP is bound at residue arginine 128. Zn(2+) contacts are provided by cysteine 131 and cysteine 134. 137 to 138 (TY) provides a ligand contact to ATP. Zn(2+) contacts are provided by cysteine 151 and cysteine 154. Positions 162 and 173 each coordinate AMP. Glutamine 201 contributes to the ATP binding site.

The protein belongs to the adenylate kinase family. Monomer.

The protein resides in the cytoplasm. The enzyme catalyses AMP + ATP = 2 ADP. Its pathway is purine metabolism; AMP biosynthesis via salvage pathway; AMP from ADP: step 1/1. Catalyzes the reversible transfer of the terminal phosphate group between ATP and AMP. Plays an important role in cellular energy homeostasis and in adenine nucleotide metabolism. This Lactobacillus johnsonii (strain CNCM I-12250 / La1 / NCC 533) protein is Adenylate kinase.